The chain runs to 424 residues: 3-phosphoshikimate 1-carboxyvinyltransferase (424 aa).

K20, S21, and R25 together coordinate 3-phosphoshikimate. K20 serves as a coordination point for phosphoenolpyruvate. The phosphoenolpyruvate site is built by G92 and R120. 4 residues coordinate 3-phosphoshikimate: S165, Q167, D313, and K340. Q167 lines the phosphoenolpyruvate pocket. Catalysis depends on D313, which acts as the Proton acceptor. R344 and R386 together coordinate phosphoenolpyruvate.

Belongs to the EPSP synthase family. Monomer.

The protein localises to the cytoplasm. It catalyses the reaction 3-phosphoshikimate + phosphoenolpyruvate = 5-O-(1-carboxyvinyl)-3-phosphoshikimate + phosphate. The protein operates within metabolic intermediate biosynthesis; chorismate biosynthesis; chorismate from D-erythrose 4-phosphate and phosphoenolpyruvate: step 6/7. Its function is as follows. Catalyzes the transfer of the enolpyruvyl moiety of phosphoenolpyruvate (PEP) to the 5-hydroxyl of shikimate-3-phosphate (S3P) to produce enolpyruvyl shikimate-3-phosphate and inorganic phosphate. This is 3-phosphoshikimate 1-carboxyvinyltransferase from Bacillus cytotoxicus (strain DSM 22905 / CIP 110041 / 391-98 / NVH 391-98).